The chain runs to 719 residues: 1,4-alpha-glucan branching enzyme GlgB (719 aa).

Residue Asp400 is the Nucleophile of the active site. The active-site Proton donor is the Glu453.

The protein belongs to the glycosyl hydrolase 13 family. GlgB subfamily. As to quaternary structure, monomer.

The catalysed reaction is Transfers a segment of a (1-&gt;4)-alpha-D-glucan chain to a primary hydroxy group in a similar glucan chain.. It participates in glycan biosynthesis; glycogen biosynthesis. In terms of biological role, catalyzes the formation of the alpha-1,6-glucosidic linkages in glycogen by scission of a 1,4-alpha-linked oligosaccharide from growing alpha-1,4-glucan chains and the subsequent attachment of the oligosaccharide to the alpha-1,6 position. The sequence is that of 1,4-alpha-glucan branching enzyme GlgB from Chlamydia caviae (strain ATCC VR-813 / DSM 19441 / 03DC25 / GPIC) (Chlamydophila caviae).